The chain runs to 101 residues: Small ribosomal subunit protein uS14 (101 aa).

The disordered stretch occupies residues 32-62; sequence GDAKRSDAEREAARLGLQKLPRNANPTRQRN. The span at 33-44 shows a compositional bias: basic and acidic residues; it reads DAKRSDAEREAA.

It belongs to the universal ribosomal protein uS14 family. In terms of assembly, part of the 30S ribosomal subunit. Contacts proteins S3 and S10.

Functionally, binds 16S rRNA, required for the assembly of 30S particles and may also be responsible for determining the conformation of the 16S rRNA at the A site. The chain is Small ribosomal subunit protein uS14 from Verminephrobacter eiseniae (strain EF01-2).